A 299-amino-acid polypeptide reads, in one-letter code: Peroxisomal biogenesis factor 19 (299 aa).

Residues 1 to 63 (MAAAEEDYGV…SPGDTAKDSL (63 aa)) form a disordered region. Ala2 carries the N-acetylalanine modification. Residues 2–56 (AAAEEDYGVGAEADRELEELLESALDDFDKAKPSPAPPSTTTAPDASGPQKRSPG) form a docking to the peroxisome membrane and binding to PEX3 region. Residues 2–91 (AAAEEDYGVG…QATAEFEKAM (90 aa)) are necessary for PEX19 function on peroxisome biogenesis. Residues 16-27 (RELEELLESALD) are compositionally biased toward acidic residues. Residues Ser35, Ser54, and Ser66 each carry the phosphoserine modification. Thr236 is subject to Phosphothreonine. Cys296 bears the Cysteine methyl ester mark. Cys296 carries S-farnesyl cysteine lipidation. Positions 297 to 299 (LIM) are cleaved as a propeptide — removed in mature form.

The protein belongs to the peroxin-19 family. Interacts with a broad range of peroxisomal membrane proteins, including PEX3, PEX10, PEX11A, PEX11B, PEX12, PEX13, PEX14 and PEX16, PXMP2/PMP22, PXMP4/PMP24, SLC25A17/PMP34, ABCD1/ALDP, ABCD2/ALDRP, and ABCD3/PMP70. Also interacts with the tumor suppressor CDKN2A/p19ARF.

It localises to the cytoplasm. The protein localises to the peroxisome membrane. Necessary for early peroxisomal biogenesis. Acts both as a cytosolic chaperone and as an import receptor for peroxisomal membrane proteins (PMPs). Binds and stabilizes newly synthesized PMPs in the cytoplasm by interacting with their hydrophobic membrane-spanning domains, and targets them to the peroxisome membrane by binding to the integral membrane protein PEX3. Excludes CDKN2A from the nucleus and prevents its interaction with MDM2, which results in active degradation of TP53. The chain is Peroxisomal biogenesis factor 19 (PEX19) from Pongo abelii (Sumatran orangutan).